Reading from the N-terminus, the 61-residue chain is Small ribosomal subunit protein bS21 (61 aa).

Positions 34 to 61 are disordered; the sequence is KREHYESPSVKRKKKSEAARKRKYKYNK. The segment covering 43-61 has biased composition (basic residues); sequence VKRKKKSEAARKRKYKYNK.

Belongs to the bacterial ribosomal protein bS21 family.

This is Small ribosomal subunit protein bS21 from Thermoanaerobacter pseudethanolicus (strain ATCC 33223 / 39E) (Clostridium thermohydrosulfuricum).